We begin with the raw amino-acid sequence, 265 residues long: Mlc titration factor A (265 aa).

Zn(2+)-binding residues include H111, H148, H152, and E211.

Belongs to the MtfA family. As to quaternary structure, interacts with Mlc. Zn(2+) serves as cofactor.

It is found in the cytoplasm. Its function is as follows. Involved in the modulation of the activity of the glucose-phosphotransferase system (glucose-PTS). Interacts with the transcriptional repressor Mlc, preventing its interaction with DNA and leading to the modulation of expression of genes regulated by Mlc, including ptsG, which encodes the PTS system glucose-specific EIICB component. Functionally, shows zinc-dependent metallopeptidase activity. The polypeptide is Mlc titration factor A (Escherichia coli O127:H6 (strain E2348/69 / EPEC)).